A 510-amino-acid polypeptide reads, in one-letter code: MKTTAAMLWEKLRDGSVEQRAIEFAKTTLPYLMVDPMSGSRGVVEHDFQSAGALLVNNLAAKLARSLFPTGIPFFRSELTDAIRREADSRDTDITEVTAALARVDRKATQRLFQNASLAVLTQVIKLLIVTGNALLYRDSDAATVVAWSLRSYAVRRDATGRWMDIVLKQRYKSKDLDEEYKQDLMRAGRNLSGSGSVDLYTHVQRKKGTAMEYAELYHEIDGVRVGKEGRWPIHLCPYIVPTWNLAPGEHYGRGHVEDYIGDFAKLSLLSEKLGLYELESLEVLNLVDEAKGAVVDDYQDAEMGDYVPGGAEAVRAYERGDYNKMAAIQQSLQAVVVRLNQAFMYGANQRDAERVTAEEVRITAEEAENTLGGTYSLLAENLQSPLAYVCLSEVDDALLQGLITKQHKPAIETGLPALSRSAAVQSMLNASQVIAGLAPIAQLDPRISLPKMMDTIWAAFSVDTSQFYKSADELQAEAEQQRQQAAQAQAAQETLLEGASDMTNALAGV.

It belongs to the podoviridae head-to-tail connector protein family. As to quaternary structure, homododecamer.

It localises to the virion. In terms of biological role, forms the portal vertex of the capsid. This portal plays critical roles in head assembly, genome packaging, neck/tail attachment, and genome ejection. The portal protein multimerizes as a single ring-shaped homododecamer arranged around a central channel. The protein is Portal protein of Pseudomonas phage phiKMV.